The primary structure comprises 84 residues: MAHKKGASSTRNGRDSNAQYLGVKRFGGQSVNAGEIIVRQRGTHFHPGLNMGRGKDDTLFALAAGVVEFGTRRGRRVVNIQTAE.

It belongs to the bacterial ribosomal protein bL27 family.

This Kocuria rhizophila (strain ATCC 9341 / DSM 348 / NBRC 103217 / DC2201) protein is Large ribosomal subunit protein bL27.